The sequence spans 465 residues: UDP-N-acetylmuramate--L-alanine ligase (465 aa).

Residue 112–118 (GTHGKTT) participates in ATP binding.

This sequence belongs to the MurCDEF family.

It localises to the cytoplasm. It carries out the reaction UDP-N-acetyl-alpha-D-muramate + L-alanine + ATP = UDP-N-acetyl-alpha-D-muramoyl-L-alanine + ADP + phosphate + H(+). The protein operates within cell wall biogenesis; peptidoglycan biosynthesis. In terms of biological role, cell wall formation. The sequence is that of UDP-N-acetylmuramate--L-alanine ligase from Burkholderia pseudomallei (strain 1106a).